Here is a 117-residue protein sequence, read N- to C-terminus: Ribosome-binding factor A (117 aa).

It belongs to the RbfA family. As to quaternary structure, monomer. Binds 30S ribosomal subunits, but not 50S ribosomal subunits or 70S ribosomes.

Its subcellular location is the cytoplasm. In terms of biological role, one of several proteins that assist in the late maturation steps of the functional core of the 30S ribosomal subunit. Associates with free 30S ribosomal subunits (but not with 30S subunits that are part of 70S ribosomes or polysomes). Required for efficient processing of 16S rRNA. May interact with the 5'-terminal helix region of 16S rRNA. The chain is Ribosome-binding factor A from Syntrophobacter fumaroxidans (strain DSM 10017 / MPOB).